The primary structure comprises 254 residues: 3-deoxy-manno-octulosonate cytidylyltransferase (254 aa).

It belongs to the KdsB family.

The protein resides in the cytoplasm. It carries out the reaction 3-deoxy-alpha-D-manno-oct-2-ulosonate + CTP = CMP-3-deoxy-beta-D-manno-octulosonate + diphosphate. It functions in the pathway nucleotide-sugar biosynthesis; CMP-3-deoxy-D-manno-octulosonate biosynthesis; CMP-3-deoxy-D-manno-octulosonate from 3-deoxy-D-manno-octulosonate and CTP: step 1/1. Its pathway is bacterial outer membrane biogenesis; lipopolysaccharide biosynthesis. Functionally, activates KDO (a required 8-carbon sugar) for incorporation into bacterial lipopolysaccharide in Gram-negative bacteria. The chain is 3-deoxy-manno-octulosonate cytidylyltransferase from Geobacter metallireducens (strain ATCC 53774 / DSM 7210 / GS-15).